The following is a 1262-amino-acid chain: Tau-tubulin kinase homolog Asator (1262 aa).

The disordered stretch occupies residues 13 to 35; it reads NASAPDDGNQSCQPSSKQDQYLS. The segment covering 20-35 has biased composition (polar residues); it reads GNQSCQPSSKQDQYLS. One can recognise a Protein kinase domain in the interval 173 to 436; sequence WKVVRKIGGG…MLIGLFERCM (264 aa). Residues 179-187 and Lys-202 each bind ATP; that span reads IGGGGFGEI. Asp-293 (proton acceptor) is an active-site residue. Disordered stretches follow at residues 662–724, 755–792, and 984–1003; these read TVTN…TSNA, RSATSTNLRPSSSASQRINSGSTIGGAVGNGSNTARSS, and KDSALQLNSTNDSLDKSRHR. The segment covering 667–679 has biased composition (basic and acidic residues); that stretch reads KTSEVNRSTEEQK. The span at 755 to 776 shows a compositional bias: polar residues; sequence RSATSTNLRPSSSASQRINSGS.

It belongs to the protein kinase superfamily. CK1 Ser/Thr protein kinase family. In terms of assembly, interacts with Mgtor. Mg(2+) is required as a cofactor. Detected in larval brain.

The protein localises to the cytoplasm. It is found in the cytoskeleton. Its subcellular location is the spindle. The enzyme catalyses L-seryl-[protein] + ATP = O-phospho-L-seryl-[protein] + ADP + H(+). It catalyses the reaction L-threonyl-[protein] + ATP = O-phospho-L-threonyl-[protein] + ADP + H(+). Probable serine/threonine protein kinase. This is Tau-tubulin kinase homolog Asator from Drosophila melanogaster (Fruit fly).